A 190-amino-acid chain; its full sequence is Crossover junction endodeoxyribonuclease RuvC (190 aa).

Catalysis depends on residues D8, E67, and D139. Mg(2+)-binding residues include D8, E67, and D139.

It belongs to the RuvC family. As to quaternary structure, homodimer which binds Holliday junction (HJ) DNA. The HJ becomes 2-fold symmetrical on binding to RuvC with unstacked arms; it has a different conformation from HJ DNA in complex with RuvA. In the full resolvosome a probable DNA-RuvA(4)-RuvB(12)-RuvC(2) complex forms which resolves the HJ. Requires Mg(2+) as cofactor.

It localises to the cytoplasm. It carries out the reaction Endonucleolytic cleavage at a junction such as a reciprocal single-stranded crossover between two homologous DNA duplexes (Holliday junction).. Its function is as follows. The RuvA-RuvB-RuvC complex processes Holliday junction (HJ) DNA during genetic recombination and DNA repair. Endonuclease that resolves HJ intermediates. Cleaves cruciform DNA by making single-stranded nicks across the HJ at symmetrical positions within the homologous arms, yielding a 5'-phosphate and a 3'-hydroxyl group; requires a central core of homology in the junction. The consensus cleavage sequence is 5'-(A/T)TT(C/G)-3'. Cleavage occurs on the 3'-side of the TT dinucleotide at the point of strand exchange. HJ branch migration catalyzed by RuvA-RuvB allows RuvC to scan DNA until it finds its consensus sequence, where it cleaves and resolves the cruciform DNA. The polypeptide is Crossover junction endodeoxyribonuclease RuvC (Pasteurella multocida (strain Pm70)).